A 67-amino-acid polypeptide reads, in one-letter code: Small ribosomal subunit protein bS21 (67 aa).

Basic and acidic residues predominate over residues 37-52; that stretch reads EKPSERKAREAAEAVR. A disordered region spans residues 37-67; sequence EKPSERKAREAAEAVRRARKMERKRLEREGF.

Belongs to the bacterial ribosomal protein bS21 family.

The sequence is that of Small ribosomal subunit protein bS21 from Gluconacetobacter diazotrophicus (strain ATCC 49037 / DSM 5601 / CCUG 37298 / CIP 103539 / LMG 7603 / PAl5).